Reading from the N-terminus, the 118-residue chain is MAGVMKLACLLLACMIVAGPITSNAALSCGSVNSNLAACIGYVLQGGVIPPACCSGVKNLNSIAKTTPDRQQACNCIQGAARALGSGLNAGRAAGIPKACGVNIPYKISTSTNCKTVR.

The N-terminal stretch at 1 to 25 (MAGVMKLACLLLACMIVAGPITSNA) is a signal peptide. 4 cysteine pairs are disulfide-bonded: Cys-29/Cys-76, Cys-39/Cys-53, Cys-54/Cys-100, and Cys-74/Cys-114.

It belongs to the plant LTP family. Expressed primarily in epidermal cells.

It is found in the secreted. It localises to the cell wall. Plant non-specific lipid-transfer proteins transfer phospholipids as well as galactolipids across membranes. May play a role in wax or cutin deposition in the cell walls of expanding epidermal cells and certain secretory tissues. This chain is Non-specific lipid-transfer protein 1 (LTP1), found in Arabidopsis thaliana (Mouse-ear cress).